Consider the following 191-residue polypeptide: Ribosome maturation factor RimM (191 aa).

In terms of domain architecture, PRC barrel spans glutamate 102 to leucine 185.

The protein belongs to the RimM family. In terms of assembly, binds ribosomal protein uS19.

Its subcellular location is the cytoplasm. Its function is as follows. An accessory protein needed during the final step in the assembly of 30S ribosomal subunit, possibly for assembly of the head region. Essential for efficient processing of 16S rRNA. May be needed both before and after RbfA during the maturation of 16S rRNA. It has affinity for free ribosomal 30S subunits but not for 70S ribosomes. This is Ribosome maturation factor RimM from Crocosphaera subtropica (strain ATCC 51142 / BH68) (Cyanothece sp. (strain ATCC 51142)).